A 70-amino-acid polypeptide reads, in one-letter code: Kappa-scoloptoxin(07)-Ssm2b (70 aa).

A signal peptide spans 1–19 (MLVFYALLFVSVFSSTVMG). A propeptide spanning residues 20–39 (ATIDKPILREAIEEIDVNKR) is cleaved from the precursor.

This sequence belongs to the scoloptoxin-07 family. Post-translationally, contains 3 disulfide bonds. In terms of tissue distribution, expressed by the venom gland.

The protein resides in the secreted. Its function is as follows. Inhibits voltage-gated potassium channels. The protein is Kappa-scoloptoxin(07)-Ssm2b of Scolopendra mutilans (Chinese red-headed centipede).